The sequence spans 496 residues: GTPase Der (496 aa).

EngA-type G domains lie at 3–166 and 208–381; these read PVVA…FDNL and IKLA…RSAT. GTP is bound by residues 9–16, 56–60, 118–121, 214–221, 261–265, and 326–329; these read GRPNVGKS, DTGGI, NKVD, DTAGV, and NKWD. In terms of domain architecture, KH-like spans 382-466; that stretch reads TRVGTSVLTR…PIRIQFQNSD (85 aa).

It belongs to the TRAFAC class TrmE-Era-EngA-EngB-Septin-like GTPase superfamily. EngA (Der) GTPase family. In terms of assembly, associates with the 50S ribosomal subunit.

GTPase that plays an essential role in the late steps of ribosome biogenesis. This Vibrio vulnificus (strain CMCP6) protein is GTPase Der.